The primary structure comprises 603 residues: Prosaposin receptor GPR37 (603 aa).

A signal peptide spans 1-26 (MPAPGAPLSRTSRLLLLLLFKVSVSA). Topologically, residues 27–255 (ALSFVPEPRN…QESYGAYAVM (229 aa)) are extracellular. N-linked (GlcNAc...) asparagine glycosylation occurs at asparagine 36. The tract at residues 39-232 (CLGESCSPLI…GGPRRGNSTN (194 aa)) is disordered. Composition is skewed to basic and acidic residues over residues 51 to 79 (RSRD…EAEV), 145 to 158 (TSER…RDEI), and 165 to 175 (HSVKTEPEPRD). Asparagine 212 and asparagine 229 each carry an N-linked (GlcNAc...) asparagine glycan. A helical transmembrane segment spans residues 256 to 276 (CLSVVIFGTGIIGNLAVMCIV). Residues 277-289 (CHNYYMRSISNSL) lie on the Cytoplasmic side of the membrane. The helical transmembrane segment at 290-310 (LANLAFWDFLIIFFCLPLVIF) threads the bilayer. The Extracellular segment spans residues 311 to 325 (HELTKKWLLEDFSCK). The cysteines at positions 324 and 409 are disulfide-linked. A helical transmembrane segment spans residues 326 to 346 (IVPYIEVASLGVTTFTLCALC). At 347–369 (IDRFRAATNVQMYYEMIENCSST) the chain is on the cytoplasmic side. The helical transmembrane segment at 370-390 (TAKLAVIWVGALLLALPEVVL) threads the bilayer. Topologically, residues 391–433 (RQLSKEDLGFSGQAPAERCVIKISPDLPDTIYVLALTYDGARL) are extracellular. Residues 434-454 (WWYFGCYFCLPTLFTITCSLV) traverse the membrane as a helical segment. Over 455–483 (TARKIRKAEKASTRGNKRQIHLESQMNCT) the chain is Cytoplasmic. The helical transmembrane segment at 484–504 (VVALTILYGFCIIPENICNIV) threads the bilayer. The Extracellular segment spans residues 505-521 (TAYMATGVSQQTMDLLN). Residues 522 to 542 (IISQFLLFFKSCVTPVLLFCL) traverse the membrane as a helical segment. The Cytoplasmic segment spans residues 543–603 (CRPFSRAFME…STFASVGTHC (61 aa)).

This sequence belongs to the G-protein coupled receptor 1 family. Forms a complex with PRKN, STUB1 and HSP70. The amount of STUB1 in the complex increases during ER stress. STUB1 promotes the dissociation of HSP70 from PRKN, thus facilitating PRKN-mediated GPR37 ubiquitination. Interacts with PACRG. The N-terminus is cleaved by ADAM10 metalloproteinase; mediating limited proteolysis leading to the release of receptor ectodomain by shedding. In addition, cleaved by FURIN between Arg-53 and Asp-54. Post-translationally, ubiquitinated by PRKN in the presence of UBE2E1 and UBE2L3 in the endoplasmic reticulum. The unfolded form is specifically ubiquitinated by SYVN1, which promotes its proteasomal degradation and prevents neuronal cell death. Highly expressed in the brain. High levels of expression were seen in fiber tracts such as the corpus callosum, anterior commissure, fornix, internal capsule, cerebral peduncles, and stria terminalis. Additionally, moderate levels of expression were seen in the pyramidal tracts and cerebellar peduncles, as well as in the spinal tract of the trigeminal nerve and the spinal fasciculi.

It localises to the cell projection. Its subcellular location is the dendrite. The protein resides in the synapse. The protein localises to the cell membrane. It is found in the endoplasmic reticulum membrane. G-protein-coupled receptor that plays a role in several physiological pathways such as resolution of inflammatory pain and oligodendrocyte differentiation. Acts as a receptor for several ligands including prosaposin, osteocalcin or neuroprotectin D1. Ligand binding induces endocytosis, followed by an ERK phosphorylation cascade. Acts as a receptor for osteocalcin (OCN) to regulate oligodendrocyte differentiation and central nervous system myelination. Mechanistically, plays a negative role in oligodendrocyte differentiation and myelination during development via activation of the ERK1/2 signaling pathway. Therefore, regulates the stability of myelin or resistance of myelin itself to demyelination. Upon activation by neuroprotectin D1 (NPD1), promotes the activation of phagocytosis in macrophages as well as the shift in cytokine release toward an anti-inflammatory profile, and thus helps to reverse inflammatory pain. In addition, the increased macrophage phagocytosis mediates protection against sepsis upon pathogen infection. Additionally, extracellular vesicles derived from efferocyte express prosaposin, which binds to macrophage GPR37 to increase expression of the efferocytosis receptor TIM4 via an ERK-AP1-dependent signaling axis, leading to increased macrophage efferocytosis efficiency and accelerated resolution of inflammation. May also act as a maturation factor of LRP6, protecting LRP6 from the endoplasmic reticulum (ER)-associated protein degradation (ERAD) and thereby promoting the Wnt/beta-catenin signaling pathway. This chain is Prosaposin receptor GPR37 (Gpr37), found in Rattus norvegicus (Rat).